The sequence spans 423 residues: Kynureninase (423 aa).

Pyridoxal 5'-phosphate contacts are provided by residues Leu105, Ser106, 133-136, Asp218, His221, and Tyr243; that span reads FPSD. Lys244 is subject to N6-(pyridoxal phosphate)lysine. Residues Trp273 and Asn301 each coordinate pyridoxal 5'-phosphate.

It belongs to the kynureninase family. Homodimer. Pyridoxal 5'-phosphate serves as cofactor.

It catalyses the reaction L-kynurenine + H2O = anthranilate + L-alanine + H(+). It carries out the reaction 3-hydroxy-L-kynurenine + H2O = 3-hydroxyanthranilate + L-alanine + H(+). It functions in the pathway amino-acid degradation; L-kynurenine degradation; L-alanine and anthranilate from L-kynurenine: step 1/1. It participates in cofactor biosynthesis; NAD(+) biosynthesis; quinolinate from L-kynurenine: step 2/3. Its function is as follows. Catalyzes the cleavage of L-kynurenine (L-Kyn) and L-3-hydroxykynurenine (L-3OHKyn) into anthranilic acid (AA) and 3-hydroxyanthranilic acid (3-OHAA), respectively. In Xanthomonas euvesicatoria pv. vesicatoria (strain 85-10) (Xanthomonas campestris pv. vesicatoria), this protein is Kynureninase.